A 607-amino-acid chain; its full sequence is MENQSPHLSLRVPTPTQQNLSFCDATPKDIKYWLAHLPKANLGETARQLYQGLIELNQLVLPVEARLQLLELFRPEVHFVCAHLERHFLNQAIVLDERPRKIANLCQALQNHLAIGYKLIVVQEAPRNSRDRAQLFAVGIQRAIRSLCGPLIRASQLYCPVPEGLWLELHQLYQLASQRGVHRLAVRDELAKHTPGLSVEQAYLIPLLLGCARCNQMRQNNIARLAEVLEPWSQLLSIQSATLPGSLFIAVPQIDGPPRYRSLYPETQLASALGIDTQPLVELIREYLLQPEAERAKARLPLIEGVTLDLLQHLSSAWGDIAERTFQRTQGQGQLTLCIGMSALHYFLAGRRPFNEVLQIQEAPEAPRFKADVQDAWAGAFDAQKVTDWQPGMPLEEIEYRPHQSPRSVQPGHPQAHAQADATEDYPTYALPIVNHSPGGYCLSWPKEVPAQLQAGELVGLQDLPGQAWSIAVVRWIRQVRNGGTQMGIEMIAPAAQPCGLQLLRKTEQSSHYLRALLLPAIAAISRPATVITPRLPFQEGSRVQINLHGEERRAVLNRRQASTGSFSQFEYRSAEPVNTPSDKPVTAPVARPPAGEEDFDSLWKSL.

Residues 323–492 (ERTFQRTQGQ…GGTQMGIEMI (170 aa)) form a pilZ-like domain region. The RXXXR motif motif lies at 324–328 (RTFQR). Residues 435-440 (NHSPGG) carry the D/NXSXXG motif motif. Positions 568 to 582 (SQFEYRSAEPVNTPS) are enriched in polar residues. Positions 568–607 (SQFEYRSAEPVNTPSDKPVTAPVARPPAGEEDFDSLWKSL) are disordered.

Monomer in the absence of c-di-GMP. Forms dimers in the presence of c-di-GMP.

Its subcellular location is the cytoplasm. Functionally, high-affinity cyclic-di-GMP binding protein that regulates type IV pili (T4P) elongation. Required for T4P-mediated surface attachment and walking motility during the early phases of surface colonization. Not required for twitching motility. Does not bind related nucleotides such as GMP, GDP, GTP or ATP. The protein is Cyclic-di-GMP receptor FimW of Pseudomonas aeruginosa (strain ATCC 15692 / DSM 22644 / CIP 104116 / JCM 14847 / LMG 12228 / 1C / PRS 101 / PAO1).